The following is a 242-amino-acid chain: 6-phosphogluconolactonase (242 aa).

It belongs to the glucosamine/galactosamine-6-phosphate isomerase family. 6-phosphogluconolactonase subfamily.

The catalysed reaction is 6-phospho-D-glucono-1,5-lactone + H2O = 6-phospho-D-gluconate + H(+). It functions in the pathway carbohydrate degradation; pentose phosphate pathway; D-ribulose 5-phosphate from D-glucose 6-phosphate (oxidative stage): step 2/3. Hydrolysis of 6-phosphogluconolactone to 6-phosphogluconate. The polypeptide is 6-phosphogluconolactonase (pgl) (Pseudomonas putida (Arthrobacter siderocapsulatus)).